We begin with the raw amino-acid sequence, 421 residues long: Testin (421 aa).

The PET domain maps to Met92–Asp199. The interval Lys134 to Cys164 is disordered. Positions Pro155 to Cys164 are enriched in basic and acidic residues. LIM zinc-binding domains follow at residues Tyr234–Glu297, Pro299–Val359, and Gln362–Ser421.

The protein belongs to the prickle / espinas / testin family. In terms of assembly, interacts via LIM domain 1 with ZYX. Interacts (via LIM domain 3) with ENAH and VASP. Interacts with ALKBH4, talin, actin, alpha-actinin, GRIP1 and PXN. Interacts (via LIM domain 2) with ACTL7A (via N-terminus). Heterodimer with ACTL7A; the heterodimer interacts with ENAH to form a heterotrimer.

The protein resides in the cytoplasm. The protein localises to the cell junction. It localises to the focal adhesion. Functionally, scaffold protein that may play a role in cell adhesion, cell spreading and in the reorganization of the actin cytoskeleton. Plays a role in the regulation of cell proliferation. May act as a tumor suppressor. This is Testin (TES) from Rhinolophus ferrumequinum (Greater horseshoe bat).